Here is a 337-residue protein sequence, read N- to C-terminus: MKRIAVLTSGGDAPGMNAAIRAVVRKAISEGMEVYGINRGYAGMVDGDIFPLGSKEVGDKISRGGTFLYSARYPEFAQLEGQLAGIEQLKKHGIEGVVVIGGDGSYHGAMRLTEHGFPAVGIPGTIDNDIAGTDYTIGFDTAVNTAVEAIDKLRDTSSSHGRTFVVEVMGRNAGDIALWAGIASGADQIIVPEEEFDIHKVVSTIKDDFENRGKNHHIIVLAEGVMSGEAFAQQLKEAGDESDLRVTNLGHILRGGSPTARDRVIASWMGAHAVELLKEGKGGLAVGIRNEELVESPILGSAEDGALFSLTDEGNIVVNNPHKARLDYAALNRSLAQ.

Residue glycine 11 coordinates ATP. 21 to 25 (RAVVR) is a binding site for ADP. ATP-binding positions include 72-73 (RY) and 102-105 (GDGS). Residue aspartate 103 coordinates Mg(2+). 125–127 (TID) is a binding site for substrate. The Proton acceptor role is filled by aspartate 127. Arginine 154 provides a ligand contact to ADP. Substrate-binding positions include arginine 162 and 169–171 (MGR). ADP-binding positions include 185-187 (GAD), arginine 212, and 214-216 (KNH). Substrate-binding positions include glutamate 223, arginine 245, and 251–254 (HILR).

This sequence belongs to the phosphofructokinase type A (PFKA) family. ATP-dependent PFK group I subfamily. Prokaryotic clade 'B1' sub-subfamily. Homotetramer. Mg(2+) is required as a cofactor.

It is found in the cytoplasm. The catalysed reaction is beta-D-fructose 6-phosphate + ATP = beta-D-fructose 1,6-bisphosphate + ADP + H(+). It functions in the pathway carbohydrate degradation; glycolysis; D-glyceraldehyde 3-phosphate and glycerone phosphate from D-glucose: step 3/4. Allosterically activated by ADP and other diphosphonucleosides, and allosterically inhibited by phosphoenolpyruvate. Its function is as follows. Catalyzes the phosphorylation of D-fructose 6-phosphate to fructose 1,6-bisphosphate by ATP, the first committing step of glycolysis. This chain is ATP-dependent 6-phosphofructokinase, found in Streptococcus equi subsp. zooepidemicus (strain H70).